The chain runs to 153 residues: Aspartate carbamoyltransferase regulatory chain (153 aa).

Residues Cys-109, Cys-114, Cys-138, and Cys-141 each coordinate Zn(2+).

It belongs to the PyrI family. As to quaternary structure, contains catalytic and regulatory chains. It depends on Zn(2+) as a cofactor.

Functionally, involved in allosteric regulation of aspartate carbamoyltransferase. The sequence is that of Aspartate carbamoyltransferase regulatory chain from Nitrosopumilus maritimus (strain SCM1).